The primary structure comprises 623 residues: NAD-dependent malic enzyme, mitochondrial (623 aa).

Residues 1–31 (MLVLCSRSRLTSSLIRRLKDQIANVSNHRSF) constitute a mitochondrion transit peptide. Arginine 88 and arginine 122 together coordinate fumarate. The active-site Proton donor is serine 143. Arginine 196 lines the (S)-malate pocket. Residue arginine 196 coordinates NAD(+). The active-site Proton acceptor is lysine 214. A divalent metal cation contacts are provided by glutamate 285 and aspartate 286. Asparagine 289 contributes to the NAD(+) binding site. Residue aspartate 309 coordinates a divalent metal cation. Alanine 345 is an NAD(+) binding site. (S)-malate contacts are provided by asparagine 464 and asparagine 509.

The protein belongs to the malic enzymes family. As to quaternary structure, heterodimer of two related subunits. The cofactor is Mg(2+). Mn(2+) serves as cofactor.

The protein localises to the mitochondrion matrix. The enzyme catalyses (S)-malate + NAD(+) = pyruvate + CO2 + NADH. It participates in photosynthesis; C4 acid pathway. This Amaranthus hypochondriacus (Prince-of-Wales feather) protein is NAD-dependent malic enzyme, mitochondrial.